Here is a 248-residue protein sequence, read N- to C-terminus: Probable transcriptional regulatory protein PsycPRwf_1013 (248 aa).

It belongs to the TACO1 family.

Its subcellular location is the cytoplasm. This Psychrobacter sp. (strain PRwf-1) protein is Probable transcriptional regulatory protein PsycPRwf_1013.